Reading from the N-terminus, the 642-residue chain is Frizzled-1 (642 aa).

The first 68 residues, 1 to 68 (MAEEAAPSES…WLLEAPLLLG (68 aa)), serve as a signal peptide directing secretion. Disordered stretches follow at residues 26-45 (PGRR…RPRA) and 76-99 (QVSG…QYNG). At 69–317 (VRAQAAGQVS…PEELRFSRTW (249 aa)) the chain is on the extracellular side. The FZ domain occupies 106-225 (PDHGYCQPIS…HGAGELCVGQ (120 aa)). 5 cysteine pairs are disulfide-bonded: C111–C172, C119–C165, C156–C193, C182–C222, and C186–C210. A glycan (N-linked (GlcNAc...) asparagine) is linked at N125. N-linked (GlcNAc...) asparagine glycosylation occurs at N226. The chain crosses the membrane as a helical span at residues 318-338 (IGIWSVLCCASTLFTVLTYLV). At 339 to 349 (DMRRFSYPERP) the chain is on the cytoplasmic side. The helical transmembrane segment at 350-370 (IIFLSGCYTAVAVAYIAGFLL) threads the bilayer. Residues 371–397 (EDRVVCNDKFAEDGARTVAQGTKKEGC) are Extracellular-facing. Residues 398-418 (TILFMMLYFFSMASSIWWVIL) traverse the membrane as a helical segment. Residues 419 to 440 (SLTWFLAAGMKWGHEAIEANSQ) are Cytoplasmic-facing. The chain crosses the membrane as a helical span at residues 441-461 (YFHLAAWAVPAIKTITILALG). Over 462-484 (QVDGDVLSGVCFVGLNNVDALRG) the chain is Extracellular. The chain crosses the membrane as a helical span at residues 485–505 (FVLAPLFVYLFIGTSFLLAGF). Over 506–531 (VSLFRIRTIMKHDGTKTEKLEKLMVR) the chain is Cytoplasmic. Residues 532–552 (IGVFSVLYTVPATIVIACYFY) form a helical membrane-spanning segment. At 553–593 (EQAFRDQWERSWVAQSCKSYAIPCPHLQGGGGVPPHPPMSP) the chain is on the extracellular side. Residues 594–614 (DFTVFMIKYLMTLIVGITSGF) traverse the membrane as a helical segment. Residues 615 to 642 (WIWSGKTLNSWRKFYTRLTNSKQGETTV) lie on the Cytoplasmic side of the membrane. The Lys-Thr-X-X-X-Trp motif, mediates interaction with the PDZ domain of Dvl family members signature appears at 620–625 (KTLNSW). The PDZ-binding motif lies at 640 to 642 (TTV).

It belongs to the G-protein coupled receptor Fz/Smo family. In terms of assembly, interacts with MYOC. Interacts with WNT7B. Post-translationally, ubiquitinated by ZNRF3, leading to its degradation by the proteasome. As to expression, expressed in chondrocytes.

The protein resides in the cell membrane. Functionally, receptor for Wnt proteins. Activated by WNT7B. Activated by WNT3A, WNT3, WNT1 and to a lesser extent WNT2, but apparently not by WNT4, WNT5A, WNT5B, WNT6, WNT7A or WNT7B. Contradictory results showing activation by WNT7B have been described for mouse. Functions in the canonical Wnt/beta-catenin signaling pathway. The canonical Wnt/beta-catenin signaling pathway leads to the activation of disheveled proteins, inhibition of GSK-3 kinase, nuclear accumulation of beta-catenin and activation of Wnt target genes. A second signaling pathway involving PKC and calcium fluxes has been seen for some family members, but it is not yet clear if it represents a distinct pathway or if it can be integrated in the canonical pathway, as PKC seems to be required for Wnt-mediated inactivation of GSK-3 kinase. Both pathways seem to involve interactions with G-proteins. May be involved in transduction and intercellular transmission of polarity information during tissue morphogenesis and/or in differentiated tissues. This Mus musculus (Mouse) protein is Frizzled-1 (Fzd1).